Here is a 144-residue protein sequence, read N- to C-terminus: Large ribosomal subunit protein uL16 (144 aa).

The protein belongs to the universal ribosomal protein uL16 family. In terms of assembly, part of the 50S ribosomal subunit.

In terms of biological role, binds 23S rRNA and is also seen to make contacts with the A and possibly P site tRNAs. In Novosphingobium aromaticivorans (strain ATCC 700278 / DSM 12444 / CCUG 56034 / CIP 105152 / NBRC 16084 / F199), this protein is Large ribosomal subunit protein uL16.